A 160-amino-acid chain; its full sequence is Non-secretory ribonuclease (160 aa).

The signal sequence occupies residues 1–27 (MVPKLFTSPICLLLLLGLMGVEGSLHA). W34 carries C-linked (Man) tryptophan glycosylation. The Proton acceptor role is filled by H42. The N-linked (GlcNAc...) asparagine glycan is linked to N44. Cystine bridges form between C50/C110, C64/C122, C82/C137, and C89/C98. 3'-nitrotyrosine is present on Y60. Residue 65 to 69 (KNQNT) coordinates substrate. N92, N111, N118, and N138 each carry an N-linked (GlcNAc...) asparagine glycan. H155 acts as the Proton donor in catalysis.

The protein belongs to the pancreatic ribonuclease family. As to quaternary structure, interacts with and forms a tight 1:1 complex with RNH1. Dimerization of two such complexes may occur.

The protein resides in the lysosome. Its subcellular location is the cytoplasmic granule. The enzyme catalyses an [RNA] containing cytidine + H2O = an [RNA]-3'-cytidine-3'-phosphate + a 5'-hydroxy-ribonucleotide-3'-[RNA].. It catalyses the reaction an [RNA] containing uridine + H2O = an [RNA]-3'-uridine-3'-phosphate + a 5'-hydroxy-ribonucleotide-3'-[RNA].. In terms of biological role, this is a non-secretory ribonuclease. It is a pyrimidine specific nuclease with a slight preference for U. Cytotoxin and helminthotoxin. Possesses a wide variety of biological activities. In Chlorocebus aethiops (Green monkey), this protein is Non-secretory ribonuclease (RNASE2).